Consider the following 181-residue polypeptide: Large ribosomal subunit protein uL6 (181 aa).

This sequence belongs to the universal ribosomal protein uL6 family. As to quaternary structure, part of the 50S ribosomal subunit.

Its function is as follows. This protein binds to the 23S rRNA, and is important in its secondary structure. It is located near the subunit interface in the base of the L7/L12 stalk, and near the tRNA binding site of the peptidyltransferase center. In Synechococcus sp. (strain JA-2-3B'a(2-13)) (Cyanobacteria bacterium Yellowstone B-Prime), this protein is Large ribosomal subunit protein uL6.